Here is a 120-residue protein sequence, read N- to C-terminus: Large ribosomal subunit protein uL18 (120 aa).

Belongs to the universal ribosomal protein uL18 family. In terms of assembly, part of the 50S ribosomal subunit; part of the 5S rRNA/L5/L18/L25 subcomplex. Contacts the 5S and 23S rRNAs.

Its function is as follows. This is one of the proteins that bind and probably mediate the attachment of the 5S RNA into the large ribosomal subunit, where it forms part of the central protuberance. This chain is Large ribosomal subunit protein uL18, found in Acidiphilium cryptum (strain JF-5).